Consider the following 829-residue polypeptide: FAST kinase domain-containing protein 1, mitochondrial (829 aa).

At K346 the chain carries N6-acetyllysine. The region spanning 761–821 is the RAP domain; the sequence is IAIELLDVRA…KDARMDYLRE (61 aa).

This sequence belongs to the FAST kinase family. Expression detected in spleen, testis, colon, heart, smooth muscle, kidney, brain, lung, liver, brown and white adipose tissue with highest expression in heart and brown adipose tissue.

It localises to the mitochondrion. Its function is as follows. Involved in the down-regulation of mitochondrial MT-ND3 mRNA levels which leads to decreased respiratory complex I abundance and activity. In Mus musculus (Mouse), this protein is FAST kinase domain-containing protein 1, mitochondrial (Fastkd1).